Here is a 725-residue protein sequence, read N- to C-terminus: Beta-adducin (725 aa).

The tract at residues 1 to 22 is disordered; that stretch reads MSEDTVPEAASPPPSQGQHYFD. Phosphoserine occurs at positions 11 and 25. Thr-55 carries the phosphothreonine modification. Ser-60 and Ser-344 each carry phosphoserine. An interaction with calmodulin region spans residues 425-444; that stretch reads KQQKEKTRWLNTPNTYLRVN. The interval 525-725 is disordered; that stretch reads AEKSRSPSTE…KSKKKEKVES (201 aa). Ser-530 and Ser-532 each carry phosphoserine. At Thr-533 the chain carries Phosphothreonine. Ser-535 bears the Phosphoserine mark. Position 561 is a phosphothreonine (Thr-561). Positions 566-589 are enriched in basic and acidic residues; the sequence is EEYKKEVERKKLEQEQEGEKDIAT. Phosphoserine is present on residues Ser-594, Ser-598, Ser-602, and Ser-606. Polar residues predominate over residues 596 to 621; it reads VKSTPASPVQSPSKAGTKSPAVSPSK. At Thr-612 the chain carries Phosphothreonine. Phosphoserine occurs at positions 614, 618, and 620. The span at 622–631 shows a compositional bias: basic and acidic residues; it reads TSEDTKKTEV. The residue at position 674 (Thr-674) is a Phosphothreonine. A phosphoserine mark is found at Ser-678, Ser-685, Ser-688, Ser-692, Ser-696, Ser-698, Ser-700, Ser-702, and Ser-712. Residues 687–700 show a composition bias toward low complexity; that stretch reads TSGPLSPEGSPSKS. Residues 701–725 are compositionally biased toward basic residues; it reads PSKKKKKFRTPSFLKKSKKKEKVES. Positions 703-720 are interaction with calmodulin; it reads KKKKKFRTPSFLKKSKKK.

It belongs to the aldolase class II family. Adducin subfamily. Found in a complex with ADD2, DMTN and SLC2A1. Interacts with SLC2A1. Heterodimer of an alpha and a beta subunit.

It localises to the cytoplasm. Its subcellular location is the cytoskeleton. The protein localises to the cell membrane. In terms of biological role, membrane-cytoskeleton-associated protein that promotes the assembly of the spectrin-actin network. Binds to the erythrocyte membrane receptor SLC2A1/GLUT1 and may therefore provide a link between the spectrin cytoskeleton to the plasma membrane. Binds to calmodulin. Calmodulin binds preferentially to the beta subunit. The protein is Beta-adducin (Add2) of Mus musculus (Mouse).